A 472-amino-acid polypeptide reads, in one-letter code: Nuclear hormone receptor family member nhr-2 (472 aa).

4 stretches are compositionally biased toward polar residues: residues 57–83 (TATN…LSQI), 90–112 (NDTI…HNQP), 138–147 (LSSTQSSPDN), and 159–171 (VRRN…SAST). Disordered stretches follow at residues 57 to 112 (TATN…HNQP) and 138 to 184 (LSST…RTNT). The segment at residues 215 to 297 (KDRCMVCGDN…VGMNRDNVRV (83 aa)) is a DNA-binding region (nuclear receptor). 2 NR C4-type zinc fingers span residues 218–238 (CMVC…CEGC) and 267–285 (CAAN…FAKC).

It belongs to the nuclear hormone receptor family.

The protein localises to the nucleus. Its function is as follows. Orphan nuclear receptor. The polypeptide is Nuclear hormone receptor family member nhr-2 (nhr-2) (Caenorhabditis elegans).